A 446-amino-acid polypeptide reads, in one-letter code: MTEQKRKLEKLTGVKGMNDILPQDAGLWEFFEATVKSLLRAYGYQNIRTPIVEHTQLFTRGIGEVTDIVEKEMYSFVDALNGENLTLRPENTAAVVRAAIEHNMLYDGPKRLWYLGPMFRHERPQRGRYRQFHQVGVEALGFAGPDADAEIIMMCQRLWDDLGLTGIKLEINSLGLAEERAAHRVELIKYLEQHVDKLDDDAQRRLYTNPLRVLDTKNPALQEIVRNAPQLIDFLGDVSRAHFDGLQQLLKANNLPFTINPRLVRGLDYYNLTVFEWVTDKLGAQGTVAAGGRYDPLIEQLGGKPTAACGWAMGVERILELLKEEHLVPEQEGVDVYVVHQGDAAREQAFIVAERLRDTGLDVILHCSADGAGASFKSQMKRADASGAAFAVIFGEDEVANGTVSVKPLRGTGAEGEKNVQQSVPVESLTEFLINAMVATAEDGDD.

The protein belongs to the class-II aminoacyl-tRNA synthetase family. As to quaternary structure, homodimer.

The protein resides in the cytoplasm. It catalyses the reaction tRNA(His) + L-histidine + ATP = L-histidyl-tRNA(His) + AMP + diphosphate + H(+). The polypeptide is Histidine--tRNA ligase (Burkholderia pseudomallei (strain 1710b)).